Here is a 180-residue protein sequence, read N- to C-terminus: Acireductone dioxygenase (180 aa).

4 residues coordinate Fe(2+): H97, H99, E103, and H141. Residues H97, H99, E103, and H141 each coordinate Ni(2+).

It belongs to the acireductone dioxygenase (ARD) family. In terms of assembly, monomer. Fe(2+) serves as cofactor. It depends on Ni(2+) as a cofactor.

It carries out the reaction 1,2-dihydroxy-5-(methylsulfanyl)pent-1-en-3-one + O2 = 3-(methylsulfanyl)propanoate + CO + formate + 2 H(+). It catalyses the reaction 1,2-dihydroxy-5-(methylsulfanyl)pent-1-en-3-one + O2 = 4-methylsulfanyl-2-oxobutanoate + formate + 2 H(+). The protein operates within amino-acid biosynthesis; L-methionine biosynthesis via salvage pathway; L-methionine from S-methyl-5-thio-alpha-D-ribose 1-phosphate: step 5/6. In terms of biological role, catalyzes 2 different reactions between oxygen and the acireductone 1,2-dihydroxy-3-keto-5-methylthiopentene (DHK-MTPene) depending upon the metal bound in the active site. Fe-containing acireductone dioxygenase (Fe-ARD) produces formate and 2-keto-4-methylthiobutyrate (KMTB), the alpha-ketoacid precursor of methionine in the methionine recycle pathway. Ni-containing acireductone dioxygenase (Ni-ARD) produces methylthiopropionate, carbon monoxide and formate, and does not lie on the methionine recycle pathway. This is Acireductone dioxygenase from Yersinia pseudotuberculosis serotype O:3 (strain YPIII).